A 700-amino-acid chain; its full sequence is Pentatricopeptide repeat-containing protein 1, mitochondrial (700 aa).

Residues 49–93 form a disordered region; that stretch reads SSSQLPLGQERQENTGSLGSDPSHSNSTATQEEDEEEEESFGTLS. Residues 62 to 78 show a composition bias toward polar residues; the sequence is NTGSLGSDPSHSNSTAT. Residues 79-88 show a composition bias toward acidic residues; that stretch reads QEEDEEEEES. 6 PPR repeats span residues 135-171, 172-206, 207-245, 246-280, 281-317, and 318-354; these read TPYWYFLQCKHLIKEGKLVEALDLFERQMLKEERLQP, MESNYTVLIGGCGRVGYLKKAFNLYNQMKKRDLEP, SDATYTALFNVCAESPWKDSALQSALKLRQQLQAKNFEL, NLKTYHALLKMAAKCADLRMCLDVFKEIIHKGHVV, TEETFSFLLMGCIQDKKTGFRYALQVWRLMLSLGLQP, and SRDSYNLLLVAARDCGLGDPQVASELLLKPREEATVL. A disordered region spans residues 393-414; that stretch reads SQALGPPEPPEARVPGKAQPEV. PPR repeat units follow at residues 519–553, 554–585, and 586–620; these read DLTFFNTLVRKKSKLGDLEGAKALLPVLAKRGLVP, NLQTFCNLAIGCHRPKDGLQLLTDMKKSQVTP, and NTHIYSALINAAIRKLNYTYLISILKDMKQNRVPV. The segment at 672–700 is disordered; that stretch reads HPWQKFRTKPQGDQDTGKEADDGCALGGR. Over residues 681–692 the composition is skewed to basic and acidic residues; it reads PQGDQDTGKEAD.

This sequence belongs to the PTCD1 family. In terms of assembly, associates with mitochondrial leucine tRNAs. Interacts with ELAC2. As to expression, abundant in testes, skeletal muscle and heart.

It localises to the mitochondrion. Its subcellular location is the mitochondrion matrix. In terms of biological role, mitochondrial protein implicated in negative regulation of leucine tRNA levels, as well as negative regulation of mitochondria-encoded proteins and COX activity. Also affects the 3'-processing of mitochondrial tRNAs. The protein is Pentatricopeptide repeat-containing protein 1, mitochondrial (PTCD1) of Homo sapiens (Human).